A 297-amino-acid chain; its full sequence is Dipicolinate synthase subunit A (297 aa).

Residues 164-165 (RT), Arg185, Thr203, 242-244 (LAS), and 264-267 (APGL) each bind NADP(+).

Dipicolinate synthase likely consists of DpaA and DpaB, since both proteins are required for DPA synthesis.

It catalyses the reaction (S)-2,3-dihydrodipicolinate + NADP(+) = dipicolinate + NADPH + H(+). Functionally, together with DpaB, catalyzes the conversion of dihydrodipicolinate to dipicolinate (DPA), which constitutes up to 10% of the dry weight of the spore. The polypeptide is Dipicolinate synthase subunit A (dpaA) (Bacillus subtilis (strain 168)).